The chain runs to 540 residues: MRLAFWLYEGTALHGISRVTNSMKGVHTVYHAPQGDDYITATYTMLERTPEFPGLSISVVRGRDLAQGVSRLPNTLQQVEQHYHPELTVIAPSCSTALLQEDLHQLAAHSGVPPEKLMVYALNPFRVSENEAADGLFTELVKRYATAQDKTAMPSVNILGFTSLGFHLRANLTSLIRILQTLGIAVNVVAPWGGSIGDLAKLPAAWLNIAPYREIGANAAAYLEEQFAMPALYDIPIGVNPTLRWIELLLEKINAMAVARGVAPIEMPPLKAFSLDGMSAPSGVPWFARTADMDSFSNKRAFVFGDATHTVGIVKFLRDELGMQICGAGTYLAQHADWMRKELEGYLPGALMVTDRFQDVASVIEDEMPDLVCGTQMERHSCRKLDVPCMVICPPTHIENHLLGYYPFFGFAGADVIADRVYVSCKLGLEKHLIDFFGDAGLEYEEDAPASNVASGVEPSTPSVSSEVSASSSASPEASAPTPSPDGDMVWTDDAEAMLKKVPFFVRKKVRKNTENFARGIGEPTITLEVFRKAKESLGG.

Residue D36 participates in [4Fe-4S] cluster binding. The Proton donor role is filled by D292. 428 to 429 is a binding site for substrate; it reads GL. A disordered region spans residues 451–490; it reads SNVASGVEPSTPSVSSEVSASSSASPEASAPTPSPDGDMV. Positions 457-481 are enriched in low complexity; that stretch reads VEPSTPSVSSEVSASSSASPEASAP.

The protein belongs to the ChlB/BchB/BchZ family. Protochlorophyllide reductase is composed of three subunits; BchL, BchN and BchB. Forms a heterotetramer of two BchB and two BchN subunits. The cofactor is [4Fe-4S] cluster.

It catalyses the reaction chlorophyllide a + oxidized 2[4Fe-4S]-[ferredoxin] + 2 ADP + 2 phosphate = protochlorophyllide a + reduced 2[4Fe-4S]-[ferredoxin] + 2 ATP + 2 H2O. Its pathway is porphyrin-containing compound metabolism; bacteriochlorophyll biosynthesis (light-independent). Component of the dark-operative protochlorophyllide reductase (DPOR) that uses Mg-ATP and reduced ferredoxin to reduce ring D of protochlorophyllide (Pchlide) to form chlorophyllide a (Chlide). This reaction is light-independent. The NB-protein (BchN-BchB) is the catalytic component of the complex. This is Light-independent protochlorophyllide reductase subunit B from Chlorobium chlorochromatii (strain CaD3).